Consider the following 217-residue polypeptide: ATP phosphoribosyltransferase (217 aa).

This sequence belongs to the ATP phosphoribosyltransferase family. Short subfamily. In terms of assembly, heteromultimer composed of HisG and HisZ subunits.

The protein resides in the cytoplasm. The catalysed reaction is 1-(5-phospho-beta-D-ribosyl)-ATP + diphosphate = 5-phospho-alpha-D-ribose 1-diphosphate + ATP. Its pathway is amino-acid biosynthesis; L-histidine biosynthesis; L-histidine from 5-phospho-alpha-D-ribose 1-diphosphate: step 1/9. Its function is as follows. Catalyzes the condensation of ATP and 5-phosphoribose 1-diphosphate to form N'-(5'-phosphoribosyl)-ATP (PR-ATP). Has a crucial role in the pathway because the rate of histidine biosynthesis seems to be controlled primarily by regulation of HisG enzymatic activity. The protein is ATP phosphoribosyltransferase of Synechococcus sp. (strain WH7803).